Consider the following 97-residue polypeptide: Large ribosomal subunit protein bL28 (97 aa).

Belongs to the bacterial ribosomal protein bL28 family.

The chain is Large ribosomal subunit protein bL28 from Rickettsia felis (strain ATCC VR-1525 / URRWXCal2) (Rickettsia azadi).